We begin with the raw amino-acid sequence, 614 residues long: uncharacterized protein (614 aa).

Transmembrane regions (helical) follow at residues Gly41–Phe61, Leu87–Val107, Asp157–Gly177, and Val178–Phe198. In terms of domain architecture, ABC transmembrane type-1 spans Ile43–Glu330. One can recognise an ABC transporter domain in the interval Ile364 to His603. Residue Gly397–Ser404 coordinates ATP.

The protein belongs to the ABC transporter superfamily.

The protein resides in the cell membrane. This is an uncharacterized protein from Haemophilus influenzae (strain ATCC 51907 / DSM 11121 / KW20 / Rd).